The chain runs to 91 residues: Small ribosomal subunit protein uS19 (91 aa).

The protein belongs to the universal ribosomal protein uS19 family.

Functionally, protein S19 forms a complex with S13 that binds strongly to the 16S ribosomal RNA. The polypeptide is Small ribosomal subunit protein uS19 (Afipia carboxidovorans (strain ATCC 49405 / DSM 1227 / KCTC 32145 / OM5) (Oligotropha carboxidovorans)).